Reading from the N-terminus, the 176-residue chain is Protein GrpE (176 aa).

A disordered region spans residues 1–28; it reads MSEQKQEFENENAENSEHLQDENLQNIE.

It belongs to the GrpE family. As to quaternary structure, homodimer.

It is found in the cytoplasm. Functionally, participates actively in the response to hyperosmotic and heat shock by preventing the aggregation of stress-denatured proteins, in association with DnaK and GrpE. It is the nucleotide exchange factor for DnaK and may function as a thermosensor. Unfolded proteins bind initially to DnaJ; upon interaction with the DnaJ-bound protein, DnaK hydrolyzes its bound ATP, resulting in the formation of a stable complex. GrpE releases ADP from DnaK; ATP binding to DnaK triggers the release of the substrate protein, thus completing the reaction cycle. Several rounds of ATP-dependent interactions between DnaJ, DnaK and GrpE are required for fully efficient folding. This is Protein GrpE from Campylobacter jejuni subsp. jejuni serotype O:2 (strain ATCC 700819 / NCTC 11168).